The chain runs to 342 residues: Polygalacturonase inhibitor 2 (342 aa).

The signal sequence occupies residues 1–29; that stretch reads MTQFNIPVTMSSSLSIILVILVSLSTAHS. 2 cysteine pairs are disulfide-bonded: Cys32-Cys62 and Cys63-Cys72. N-linked (GlcNAc...) (complex) asparagine glycosylation is present at Asn64. LRR repeat units follow at residues 82–107, 108–132, 133–156, 157–180, 181–205, 206–228, 229–252, 253–275, 276–299, and 300–319; these read NNLD…LPYL, NFLY…LTQL, HYLY…IKTL, VTLD…LPNL, VGIT…SKLF, TSMT…NLNL, AFVD…DKNT, QKIH…SKNL, NGLD…LKFL, and HSLN…GGNL. A glycan (N-linked (GlcNAc...) (complex) asparagine) is linked at Asn141. The N-linked (GlcNAc...) asparagine glycan is linked to Asn303. 2 disulfide bridges follow: Cys310-Cys332 and Cys334-Cys341.

It belongs to the polygalacturonase-inhibiting protein family. Asn-303 is not glycosylated.

It is found in the secreted. Its subcellular location is the cell wall. The protein resides in the membrane. Its function is as follows. Inhibitor of fungal polygalacturonase. It is an important factor for plant resistance to phytopathogenic fungi. Inhibits all polygalacturonases (PG) tested, with the exception of PG from F.oxysporum which was only inhibited at 60%. The sequence is that of Polygalacturonase inhibitor 2 (PGIP2) from Phaseolus vulgaris (Kidney bean).